We begin with the raw amino-acid sequence, 363 residues long: Protein-glutamate methylesterase/protein-glutamine glutaminase 2 (363 aa).

The 118-residue stretch at 7–124 (RVLVVDDSAL…SLTLENVADE (118 aa)) folds into the Response regulatory domain. Aspartate 58 is subject to 4-aspartylphosphate. The CheB-type methylesterase domain maps to 160-357 (PVASRTTPSK…NLLMVQSAAQ (198 aa)). Residues serine 176, histidine 203, and aspartate 299 contribute to the active site.

It belongs to the CheB family. Post-translationally, phosphorylated by CheA. Phosphorylation of the N-terminal regulatory domain activates the methylesterase activity.

It is found in the cytoplasm. It catalyses the reaction [protein]-L-glutamate 5-O-methyl ester + H2O = L-glutamyl-[protein] + methanol + H(+). The catalysed reaction is L-glutaminyl-[protein] + H2O = L-glutamyl-[protein] + NH4(+). Involved in chemotaxis. Part of a chemotaxis signal transduction system that modulates chemotaxis in response to various stimuli. Catalyzes the demethylation of specific methylglutamate residues introduced into the chemoreceptors (methyl-accepting chemotaxis proteins or MCP) by CheR. Also mediates the irreversible deamidation of specific glutamine residues to glutamic acid. This chain is Protein-glutamate methylesterase/protein-glutamine glutaminase 2, found in Koribacter versatilis (strain Ellin345).